The following is a 351-amino-acid chain: DNA polymerase IV (351 aa).

Residues 4–185 (IIHVDMDCFY…LPLGKIPGVG (182 aa)) enclose the UmuC domain. 2 residues coordinate Mg(2+): D8 and D103. E104 is an active-site residue.

This sequence belongs to the DNA polymerase type-Y family. In terms of assembly, monomer. It depends on Mg(2+) as a cofactor.

The protein localises to the cytoplasm. The enzyme catalyses DNA(n) + a 2'-deoxyribonucleoside 5'-triphosphate = DNA(n+1) + diphosphate. Functionally, poorly processive, error-prone DNA polymerase involved in untargeted mutagenesis. Copies undamaged DNA at stalled replication forks, which arise in vivo from mismatched or misaligned primer ends. These misaligned primers can be extended by PolIV. Exhibits no 3'-5' exonuclease (proofreading) activity. May be involved in translesional synthesis, in conjunction with the beta clamp from PolIII. The protein is DNA polymerase IV of Citrobacter koseri (strain ATCC BAA-895 / CDC 4225-83 / SGSC4696).